Consider the following 505-residue polypeptide: Lysine--tRNA ligase (505 aa).

Residues E415 and E422 each contribute to the Mg(2+) site.

The protein belongs to the class-II aminoacyl-tRNA synthetase family. Homodimer. Mg(2+) is required as a cofactor.

The protein localises to the cytoplasm. It catalyses the reaction tRNA(Lys) + L-lysine + ATP = L-lysyl-tRNA(Lys) + AMP + diphosphate. In Vibrio parahaemolyticus serotype O3:K6 (strain RIMD 2210633), this protein is Lysine--tRNA ligase.